The sequence spans 318 residues: Protein IMPACT-A (318 aa).

Residues 14–116 (DEVEALTSIY…EKIREFLLGK (103 aa)) form the RWD domain. Residues 296–318 (EESSKQTAKSKKVGKECKKKADH) form a disordered region. Over residues 308 to 318 (VGKECKKKADH) the composition is skewed to basic and acidic residues.

The protein belongs to the IMPACT family. Interacts with GCN1; prevents the interaction of GCN1 with EIF2AK4/GCN2 and inhibits EIF2AK4/GCN2 kinase activity. Interaction with RPL39; this interaction occurs in a GCN1-independent manner. Associates with ribosomes; this interaction occurs in a GCN1-independent manner. Associates with actin; this interaction occurs in a GCN1-independent manner.

The protein resides in the cytoplasm. Translational regulator that ensures constant high levels of translation upon a variety of stress conditions, such as amino acid starvation, UV-C irradiation, proteasome inhibitor treatment and glucose deprivation. Plays a role as a negative regulator of the EIF2AK4/GCN2 kinase activity; impairs GCN1-mediated EIF2AK4/GCN2 activation, and hence EIF2AK4/GCN2-mediated eIF-2-alpha phosphorylation and subsequent down-regulation of protein synthesis. Plays a role in differentiation of neuronal cells by stimulating neurite outgrowth. This is Protein IMPACT-A (impact-A) from Xenopus tropicalis (Western clawed frog).